A 522-amino-acid chain; its full sequence is Alanine aminotransferase 2 (522 aa).

K340 is subject to N6-(pyridoxal phosphate)lysine. 3 positions are modified to N6-acetyllysine: K414, K504, and K511.

It belongs to the class-I pyridoxal-phosphate-dependent aminotransferase family. Alanine aminotransferase subfamily. In terms of assembly, homodimer. Requires pyridoxal 5'-phosphate as cofactor. As to expression, specifically induced in fatty liver. Highly expressed in muscle, liver and white adipose tissue. Moderately expressed in brain and kidney and expressed at low levels in the heart.

It catalyses the reaction L-alanine + 2-oxoglutarate = pyruvate + L-glutamate. Its pathway is amino-acid degradation; L-alanine degradation via transaminase pathway; pyruvate from L-alanine: step 1/1. Its function is as follows. Catalyzes the reversible transamination between alanine and 2-oxoglutarate to form pyruvate and glutamate. In Mus musculus (Mouse), this protein is Alanine aminotransferase 2 (Gpt2).